The primary structure comprises 140 residues: Nucleoside diphosphate kinase (140 aa).

Residues lysine 11, phenylalanine 59, arginine 87, threonine 93, arginine 104, and asparagine 114 each contribute to the ATP site. Residue histidine 117 is the Pros-phosphohistidine intermediate of the active site.

Belongs to the NDK family. In terms of assembly, homotetramer. Mg(2+) serves as cofactor.

The protein resides in the cytoplasm. The catalysed reaction is a 2'-deoxyribonucleoside 5'-diphosphate + ATP = a 2'-deoxyribonucleoside 5'-triphosphate + ADP. It catalyses the reaction a ribonucleoside 5'-diphosphate + ATP = a ribonucleoside 5'-triphosphate + ADP. Major role in the synthesis of nucleoside triphosphates other than ATP. The ATP gamma phosphate is transferred to the NDP beta phosphate via a ping-pong mechanism, using a phosphorylated active-site intermediate. The protein is Nucleoside diphosphate kinase of Rhizobium etli (strain CIAT 652).